Here is a 410-residue protein sequence, read N- to C-terminus: Sporulation killing factor maturation protein SkfB (410 aa).

The Radical SAM core domain maps to Ser-103–Asp-314. Positions 117, 121, 124, 380, 385, and 387 each coordinate [4Fe-4S] cluster.

Belongs to the radical SAM superfamily. [4Fe-4S] cluster is required as a cofactor.

The protein localises to the cytoplasm. Catalyzes the formation of the thioether bond required for production of the sporulation killing factor (SKF) from SkfA. Forms the cysteine-methionine thioether bond found in SKF; the acceptor amino acid can be hydrophobic, aromatic or a small hydrophilic amino acid but not a larger hydrophilic amino acid, i.e. Met=Ala, Phe, Leu, Tyr&gt;Asn, Ser&gt;&gt;Gln, Glu, Lys. The relative position of Cys and Met in the substrate cannot be inverted, in vitro the thioether bond cannot be made in the absence of the SkfA propeptide, suggesting this is the first reaction in SKF maturation. In vitro, in the absence of a second substrate, cleaves S-adenosyl-L-methionine into Met and 5'-dA. In Bacillus subtilis (strain 168), this protein is Sporulation killing factor maturation protein SkfB.